Consider the following 218-residue polypeptide: Thiopurine S-methyltransferase (218 aa).

S-adenosyl-L-methionine is bound by residues W10, L45, E66, and R123.

Belongs to the class I-like SAM-binding methyltransferase superfamily. TPMT family.

The protein localises to the cytoplasm. The enzyme catalyses S-adenosyl-L-methionine + a thiopurine = S-adenosyl-L-homocysteine + a thiopurine S-methylether.. In terms of biological role, involved in the biological cycling of tellurium and selenium. Tellurium resistance (Ter) mechanism. The chain is Thiopurine S-methyltransferase from Pseudomonas syringae pv. pisi.